The chain runs to 392 residues: Tryptophan synthase beta chain (392 aa).

Residue Lys-86 is modified to N6-(pyridoxal phosphate)lysine.

The protein belongs to the TrpB family. As to quaternary structure, tetramer of two alpha and two beta chains. Requires pyridoxal 5'-phosphate as cofactor.

The catalysed reaction is (1S,2R)-1-C-(indol-3-yl)glycerol 3-phosphate + L-serine = D-glyceraldehyde 3-phosphate + L-tryptophan + H2O. It participates in amino-acid biosynthesis; L-tryptophan biosynthesis; L-tryptophan from chorismate: step 5/5. Functionally, the beta subunit is responsible for the synthesis of L-tryptophan from indole and L-serine. In Buchnera aphidicola subsp. Melaphis rhois, this protein is Tryptophan synthase beta chain (trpB).